The sequence spans 2057 residues: Myosin heavy chain, non-muscle (2057 aa).

Residues 78–128 (HRSVLVWVPHENQGFVAASIKREHGDEVEVELAETGKRVMILRDDIQKMNP) form the Myosin N-terminal SH3-like domain. The region spanning 132-867 (DKVEDMAELT…VLAHLEEERD (736 aa)) is the Myosin motor domain. Position 225 to 232 (225 to 232 (GESGAGKT)) interacts with ATP. Residues 250 to 260 (PKGSGAVPHPA) are 25 kDa/50 kDa junction. Residues 722-734 (DTQFGARTRKGMF) form a 50 kDa/20 kDa junction region. An actin-binding region spans residues 745–767 (LAKLMDTLRNTNPNFVRCIIPNH). Positions 782 to 798 (QLRCNGVLEGIRICRQG) are reactive sulfhydryl/actin-binding. One can recognise an IQ domain in the interval 870 to 899 (ISDLIVNFQAFCRGFLARRNYQKRLQQLNA). Positions 926–2016 (KPLLEVTKQE…SLKTKLRRTG (1091 aa)) form a coiled coil. Disordered regions lie at residues 1124-1144 (EERL…KRKI), 1782-1802 (SSER…EEIA), and 2008-2057 (LKTK…DSAN). An alpha-helical tailpiece (LMM) region spans residues 1343–2010 (SQIAELQVKL…MNREINSLKT (668 aa)). Positions 1343–2057 (SQIAELQVKL…ESLDGEDSAN (715 aa)) are light meromyosin (LMM). Over residues 1782-1792 (SSERARRAAET) the composition is skewed to basic and acidic residues. Positions 2011 to 2057 (KLRRTGGIGLSSSRLTGTPSSKRAGGGGGSDDSSVQDESLDGEDSAN) are globular tailpiece. Residues serine 2021 and serine 2022 each carry the phosphoserine modification. A compositionally biased stretch (acidic residues) spans 2044-2057 (SVQDESLDGEDSAN).

This sequence belongs to the TRAFAC class myosin-kinesin ATPase superfamily. Myosin family. As to quaternary structure, interacts with sau. Interacts with ck and Ubr3. Post-translationally, ubiquitinated. As to expression, in Johnston's organ, expressed in neurons and scolopale cells.

Its subcellular location is the cell projection. It localises to the cilium. The protein localises to the cytoplasm. Nonmuscle myosin appears to be responsible for cellularization. Required for morphogenesis and cytokinesis. Necessary for auditory transduction: plays a role in Johnston's organ organization by acting in scolopidial apical attachment. Interaction with the myosin ck may be important for this function. Localizes to and defines the trailing edge of cells during larval epidermal wound healing. This process is dependent on the phosphatidylinositol 4-phosphate 5-kinase sktl/skittles. In Drosophila melanogaster (Fruit fly), this protein is Myosin heavy chain, non-muscle (zip).